Reading from the N-terminus, the 206-residue chain is Large ribosomal subunit protein uL4 (206 aa).

Residues 47–77 are disordered; the sequence is GTHDTKTRGEVSGGGRKPWRQKGTGRARHGS. Over residues 63–77 the composition is skewed to basic residues; sequence KPWRQKGTGRARHGS.

The protein belongs to the universal ribosomal protein uL4 family. As to quaternary structure, part of the 50S ribosomal subunit.

One of the primary rRNA binding proteins, this protein initially binds near the 5'-end of the 23S rRNA. It is important during the early stages of 50S assembly. It makes multiple contacts with different domains of the 23S rRNA in the assembled 50S subunit and ribosome. Its function is as follows. Forms part of the polypeptide exit tunnel. This is Large ribosomal subunit protein uL4 from Carboxydothermus hydrogenoformans (strain ATCC BAA-161 / DSM 6008 / Z-2901).